The chain runs to 575 residues: Transmembrane protein 108 (575 aa).

A helical transmembrane segment spans residues 9 to 29 (YCQLLSFLLILALTEALAFAI). An interaction with SH3GL2 region spans residues 31-169 (EPSPRESLQV…TTTRRPPRPP (139 aa)). The disordered stretch occupies residues 65 to 398 (MLTPNPDGPP…PSRVSESTIS (334 aa)). The segment covering 74 to 87 (PSQAAAPMATPTPR) has biased composition (low complexity). Positions 95-115 (HTISTIAATVTAPHSESSLST) are enriched in polar residues. The span at 146–160 (PPGATSRPTTAPPRT) shows a compositional bias: low complexity. The interaction with DST (isoform 1) stretch occupies residues 173-407 (RKGAGNSSRP…SGAKEETVAT (235 aa)). Positions 244-271 (YSSSPQPQTVAATTVPSNTSWAPTTTSL) are enriched in polar residues. Residues 290–318 (TFTSQGGTPDATAASGAPVSPQAAPVPSQ) are compositionally biased toward low complexity. Residues 329-352 (PSHSDSWLTVTPGTSRPLSTSSGV) show a composition bias toward polar residues. The span at 353 to 366 (FTAATGPTPAAFDT) shows a compositional bias: low complexity. A compositionally biased stretch (polar residues) spans 367–398 (SVSAPSQGIPQGASTTPQAPTHPSRVSESTIS). The helical transmembrane segment at 469-489 (IAWVILAISVPISSCSVLLTV) threads the bilayer. The interval 490–575 (CCMKRKKKTA…FVGNDQVSEI (86 aa)) is interaction with CYFIP2.

Interacts with DST (isoform 1). Interacts with SH3GL2. Interacts (via N-terminus) with CYFIP1 and CYFIP2; the interactions associate TMEM108 with the WAVE1 complex. Glycosylated.

Its subcellular location is the membrane. The protein resides in the postsynaptic density. It localises to the endosome membrane. It is found in the cell projection. The protein localises to the axon. Its subcellular location is the dendrite. The protein resides in the early endosome. Its function is as follows. Transmembrane protein required for proper cognitive functions. Involved in the development of dentate gyrus (DG) neuron circuitry, is necessary for AMPA receptors surface expression and proper excitatory postsynaptic currents of DG granule neurons. Regulates the organization and stability of the microtubule network of sensory neurons to allow axonal transport. Through the interaction with DST, mediates the docking of the dynein/dynactin motor complex to vesicle cargos for retrograde axonal transport. In hippocampal neurons, required for BDNF-dependent dendrite outgrowth. Cooperates with SH3GL2 and recruits the WAVE1 complex to facilitate actin-dependent BDNF:NTRK2 early endocytic trafficking and mediate signaling from early endosomes. The polypeptide is Transmembrane protein 108 (Homo sapiens (Human)).